Here is a 369-residue protein sequence, read N- to C-terminus: tRNA(Met) cytidine acetate ligase (369 aa).

Residues 7–20, glycine 96, asparagine 152, and arginine 175 contribute to the ATP site; that span reads VAEFNPFHNGHKYL.

It belongs to the TmcAL family.

It localises to the cytoplasm. It carries out the reaction cytidine(34) in elongator tRNA(Met) + acetate + ATP = N(4)-acetylcytidine(34) in elongator tRNA(Met) + AMP + diphosphate. Its function is as follows. Catalyzes the formation of N(4)-acetylcytidine (ac(4)C) at the wobble position of elongator tRNA(Met), using acetate and ATP as substrates. First activates an acetate ion to form acetyladenylate (Ac-AMP) and then transfers the acetyl group to tRNA to form ac(4)C34. This is tRNA(Met) cytidine acetate ligase from Streptococcus agalactiae serotype III (strain NEM316).